The chain runs to 153 residues: SsrA-binding protein (153 aa).

This sequence belongs to the SmpB family.

The protein localises to the cytoplasm. Required for rescue of stalled ribosomes mediated by trans-translation. Binds to transfer-messenger RNA (tmRNA), required for stable association of tmRNA with ribosomes. tmRNA and SmpB together mimic tRNA shape, replacing the anticodon stem-loop with SmpB. tmRNA is encoded by the ssrA gene; the 2 termini fold to resemble tRNA(Ala) and it encodes a 'tag peptide', a short internal open reading frame. During trans-translation Ala-aminoacylated tmRNA acts like a tRNA, entering the A-site of stalled ribosomes, displacing the stalled mRNA. The ribosome then switches to translate the ORF on the tmRNA; the nascent peptide is terminated with the 'tag peptide' encoded by the tmRNA and targeted for degradation. The ribosome is freed to recommence translation, which seems to be the essential function of trans-translation. This Cytophaga hutchinsonii (strain ATCC 33406 / DSM 1761 / CIP 103989 / NBRC 15051 / NCIMB 9469 / D465) protein is SsrA-binding protein.